We begin with the raw amino-acid sequence, 298 residues long: Pyridoxal kinase PdxY (298 aa).

Ser17 is a binding site for substrate. ATP contacts are provided by Asp119 and Glu156. Asp234 is a binding site for substrate.

This sequence belongs to the pyridoxine kinase family. PdxY subfamily. As to quaternary structure, homodimer. It depends on Mg(2+) as a cofactor.

It carries out the reaction pyridoxal + ATP = pyridoxal 5'-phosphate + ADP + H(+). Its pathway is cofactor metabolism; pyridoxal 5'-phosphate salvage; pyridoxal 5'-phosphate from pyridoxal: step 1/1. Functionally, pyridoxal kinase involved in the salvage pathway of pyridoxal 5'-phosphate (PLP). Catalyzes the phosphorylation of pyridoxal to PLP. The protein is Pyridoxal kinase PdxY of Deinococcus radiodurans (strain ATCC 13939 / DSM 20539 / JCM 16871 / CCUG 27074 / LMG 4051 / NBRC 15346 / NCIMB 9279 / VKM B-1422 / R1).